Reading from the N-terminus, the 454-residue chain is NADP-specific glutamate dehydrogenase (454 aa).

Ser2 is modified (N-acetylserine). Lys114 is an active-site residue.

The protein belongs to the Glu/Leu/Phe/Val dehydrogenases family. Homohexamer.

The catalysed reaction is L-glutamate + NADP(+) + H2O = 2-oxoglutarate + NH4(+) + NADPH + H(+). The polypeptide is NADP-specific glutamate dehydrogenase (gdh) (Neurospora crassa (strain ATCC 24698 / 74-OR23-1A / CBS 708.71 / DSM 1257 / FGSC 987)).